Consider the following 534-residue polypeptide: CD276 antigen (534 aa).

An N-terminal signal peptide occupies residues 1–28 (MLRRRGSPGMGVHVGAALGALWFCLTGA). The region spanning 29–139 (LEVQVPEDPV…GSAAVSLQVA (111 aa)) is the Ig-like V-type 1 domain. Residues 29–466 (LEVQVPEDPV…GQPMTFPPEA (438 aa)) lie on the Extracellular side of the membrane. Intrachain disulfides connect C50–C122, C165–C220, C268–C340, and C383–C438. N-linked (GlcNAc...) asparagine glycosylation is found at N104, N189, N215, N322, N407, and N433. The Ig-like C2-type 1 domain occupies 145-238 (PSMTLEPNKD…QDAHSSVTIT (94 aa)). The Ig-like V-type 2 domain maps to 243-357 (PTGAVEVQVP…GSAAVSLQVA (115 aa)). The Ig-like C2-type 2 domain occupies 363-456 (PSMTLEPNKD…QDAHGSVTIT (94 aa)). A helical transmembrane segment spans residues 467–487 (LWVTVGLSVCLIALLVALAFV). Residues 488-534 (CWRKIKQSCEEENAGAEDQDGEGEGSKTALQPLKHSDSKEDDGQEIA) lie on the Cytoplasmic side of the membrane. The segment covering 498–510 (EENAGAEDQDGEG) has biased composition (acidic residues). The interval 498–534 (EENAGAEDQDGEGEGSKTALQPLKHSDSKEDDGQEIA) is disordered. At S525 the chain carries Phosphoserine.

It belongs to the immunoglobulin superfamily. BTN/MOG family. Interacts with TREML2 and this interaction enhances T-cell activation. Ubiquitous but not detectable in peripheral blood lymphocytes or granulocytes. Weakly expressed in resting monocytes. Expressed in dendritic cells derived from monocytes. Expressed in epithelial cells of sinonasal tissue. Expressed in extravillous trophoblast cells and Hofbauer cells of the first trimester placenta and term placenta.

It is found in the membrane. In terms of biological role, may participate in the regulation of T-cell-mediated immune response. May play a protective role in tumor cells by inhibiting natural-killer mediated cell lysis as well as a role of marker for detection of neuroblastoma cells. May be involved in the development of acute and chronic transplant rejection and in the regulation of lymphocytic activity at mucosal surfaces. Could also play a key role in providing the placenta and fetus with a suitable immunological environment throughout pregnancy. Both isoform 1 and isoform 2 appear to be redundant in their ability to modulate CD4 T-cell responses. Isoform 2 is shown to enhance the induction of cytotoxic T-cells and selectively stimulates interferon gamma production in the presence of T-cell receptor signaling. The sequence is that of CD276 antigen (CD276) from Homo sapiens (Human).